The primary structure comprises 487 residues: Gasdermin-D (487 aa).

Phosphotyrosine is present on tyrosine 38. Cysteine 39, cysteine 57, and cysteine 77 each carry S-(2-succinyl)cysteine. Beta stranded transmembrane passes span 92–98 (QGRVMLS) and 104–109 (KISGGA). Position 122 is an S-(2-succinyl)cysteine (cysteine 122). The next 2 membrane-spanning stretches (beta stranded) occupy residues 181-187 (GSGQFTL) and 192-198 (CLKGEGK). 2 positions are modified to S-(2-succinyl)cysteine: cysteine 192 and cysteine 265. Cysteine 192 carries the S-palmitoyl cysteine lipid modification. The interval 278–298 (IDEEELIEAADFQGLYAEVKA) is linker helix loop. Cysteine 299, cysteine 434, and cysteine 487 each carry S-(2-succinyl)cysteine.

The protein belongs to the gasdermin family. In terms of assembly, homooligomer; homooligomeric ring-shaped pore complex containing 27-28 subunits when inserted in the membrane. Homooligomerization is promoted by the mTORC1 complex in macrophages. In response to a canonical inflammasome stimulus, such as nigericin, recruited to NLRP3 inflammasone with similar kinetics to that of uncleaved CASP1 precursor. Although this recruitment is also observed in the absence of PYCARD, it is more efficient in its presence. Post-translationally, cleavage at Asp-276 by CASP1 (mature and uncleaved precursor forms), CASP4/CASP11 or CASP8 relieves autoinhibition and is sufficient to initiate pyroptosis. Cleavage by CASP1 and CASP4/CASP11 is not strictly dependent on the consensus cleavage site on GSDMD but depends on an exosite interface on CASP1 that recognizes and binds the Gasdermin-D, C-terminal (GSDMD-CT) part. Cleavage by CASP8 takes place following inactivation of MAP3K7/TAK1 by Yersinia toxin YopJ. Cleavage at Asp-88 by CASP3 or CASP7 inactivates the ability to mediate pyroptosis, but generates the Gasdermin-D, p13 chain, which translocates to the nucleus and acts as a transcription regulator. Cleavage by papain allergen generates the Gasdermin-D, p40 chain. Palmitoylated at Cys-192 by ZDHHC5 and ZDHHC9 in response to microbial infection and danger signals. May also be palmitoylated by ZDHHC7. Palmitoylation takes place before cleavage by caspases (CASP1, CASP4, CASP5 or CASP8) and is required for membrane translocation and pore formation. Depalmitoylated by LYPLA2. In terms of processing, succination of Cys-192 by the Krebs cycle intermediate fumarate, which leads to S-(2-succinyl)cysteine residues, inhibits processing by caspases, and ability to initiate pyroptosis. Succination modification is catalyzed by a non-enzymatic reaction caused by an accumulation of fumarate. Post-translationally, glycosylated: O-GlcNAcylation by OGT leads to reduced cleavage by CASP4 and decreased LPS-induced endothelial cell pyroptosis. As to expression, highly expressed in brain endothelial cells.

It is found in the cytoplasm. The protein localises to the cytosol. It localises to the inflammasome. The protein resides in the cell membrane. Its subcellular location is the secreted. It is found in the mitochondrion membrane. The protein localises to the nucleus. Its activity is regulated as follows. The full-length protein before cleavage is inactive: intramolecular interactions between N- and C-terminal domains mediate autoinhibition in the absence of activation signal. The intrinsic pyroptosis-inducing activity is carried by the released N-terminal moiety (Gasdermin-D, N-terminal) following cleavage by inflammatory caspases CASP1, CASP4/CASP11 or CASP8. Cleavage at Asp-88 by CASP3 or CASP7 inactivates the ability to mediate pyroptosis. Pore formation is specifically inhibited by VHH(GSDMD-1) nanobody, protecting against excessive pyroptosis. Inhibited by small molecule NU6300, which covalently reacts with Cys-191, thereby preventing palmitoylation and pyroptosis. Functionally, precursor of a pore-forming protein that plays a key role in host defense against pathogen infection and danger signals. This form constitutes the precursor of the pore-forming protein: upon cleavage, the released N-terminal moiety (Gasdermin-D, N-terminal) binds to membranes and forms pores, triggering pyroptosis. Its function is as follows. Promotes pyroptosis in response to microbial infection and danger signals. Produced by the cleavage of gasdermin-D by inflammatory caspases CASP1 or CASP4/CASP11 in response to canonical, as well as non-canonical (such as cytosolic LPS) inflammasome activators. After cleavage, moves to the plasma membrane where it strongly binds to inner leaflet lipids, including monophosphorylated phosphatidylinositols, such as phosphatidylinositol 4-phosphate, bisphosphorylated phosphatidylinositols, such as phosphatidylinositol (4,5)-bisphosphate, as well as phosphatidylinositol (3,4,5)-bisphosphate, and more weakly to phosphatidic acid and phosphatidylserine. Homooligomerizes within the membrane and forms pores of 10-15 nanometers (nm) of inner diameter, allowing the release of mature interleukin-1 (IL1B and IL18) and triggering pyroptosis. Gasdermin pores also allow the release of mature caspase-7 (CASP7). In some, but not all, cells types, pyroptosis is followed by pyroptotic cell death, which is caused by downstream activation of ninjurin-1 (NINJ1), which mediates membrane rupture (cytolysis). Also forms pores in the mitochondrial membrane, resulting in release of mitochondrial DNA (mtDNA) into the cytosol. Gasdermin-D, N-terminal released from pyroptotic cells into the extracellular milieu rapidly binds to and kills both Gram-negative and Gram-positive bacteria, without harming neighboring mammalian cells, as it does not disrupt the plasma membrane from the outside due to lipid-binding specificity. Under cell culture conditions, also active against intracellular bacteria, such as Listeria monocytogenes. Also active in response to MAP3K7/TAK1 inactivation by Yersinia toxin YopJ, which triggers cleavage by CASP8 and subsequent activation. Required for mucosal tissue defense against enteric pathogens. Activation of the non-canonical inflammasome in brain endothelial cells can lead to excessive pyroptosis, leading to blood-brain barrier breakdown. Strongly binds to bacterial and mitochondrial lipids, including cardiolipin. Does not bind to unphosphorylated phosphatidylinositol, phosphatidylethanolamine nor phosphatidylcholine. In terms of biological role, transcription coactivator produced by the cleavage by CASP3 or CASP7 in the upper small intestine in response to dietary antigens. Required to maintain food tolerance in small intestine: translocates to the nucleus and acts as a coactivator for STAT1 to induce the transcription of CIITA and MHC class II molecules, which in turn induce type 1 regulatory T (Tr1) cells in upper small intestine. Produced by the cleavage by papain allergen. After cleavage, moves to the plasma membrane and homooligomerizes within the membrane and forms pores of 10-15 nanometers (nm) of inner diameter, allowing the specific release of mature interleukin-33 (IL33), promoting type 2 inflammatory immune response. The sequence is that of Gasdermin-D from Mus musculus (Mouse).